Here is a 509-residue protein sequence, read N- to C-terminus: MEFSWLETRWARPFYLAFVFCLALGLLQAIKLYLRRQRLLRDLRPFPAPPTHWFLGHQKFIQDDNMEKLEEIIEKYPRAFPFWIGPFQAFFCIYDPDYAKTLLSRTDPKSQYLQKFSPPLLGKGLAALDGPKWFQHRRLLTPGFHFNILKAYIEVMAHSVKMMLDKWEKICSTQDTSVEVYEHINSMSLDIIMKCAFSKETNCQTNSTHDPYAKAIFELSKIIFHRLYSLLYHSDIIFKLSPQGYRFQKLSRVLNQYTDTIIQERKKSLQAGVKQDNTPKRKYQDFLDIVLSAKDESGSSFSDIDVHSEVSTFLLAGHDTLAASISWILYCLALNPEHQERCREEVRGILGDGSSITWDQLGEMSYTTMCIKETCRLIPAVPSISRDLSKPLTFPDGCTLPAGITVVLSIWGLHHNPAVWKNPKVFDPLRFSQENSDQRHPYAYLPFSAGSRNCIGQEFAMIELKVTIALILLHFRVTPDPTRPLTFPNHFILKPKNGMYLHLKKLSEC.

A helical membrane pass occupies residues 14 to 34 (FYLAFVFCLALGLLQAIKLYL). Cys454 lines the heme pocket.

The protein belongs to the cytochrome P450 family. Heme serves as cofactor. Expressed in brain, heart, kidney and skin and, at lower levels, in skeletal muscle and liver. In the brain, high levels are detected in amygdala and lower levels in globus pallidus and cerebellum. In the heart, very high levels in aorta, but very low levels in other heart regions. Also expressed in breast, prostate and colon.

The protein resides in the endoplasmic reticulum membrane. It is found in the microsome membrane. The enzyme catalyses N-(5Z,8Z,11Z,14Z-eicosatetraenoyl)-ethanolamine + reduced [NADPH--hemoprotein reductase] + O2 = N-(14,15-epoxy-5Z,8Z,11Z-eicosatrienoyl)-ethanolamine + oxidized [NADPH--hemoprotein reductase] + H2O + H(+). Its function is as follows. A cytochrome P450 monooxygenase that selectively catalyzes the epoxidation of the last double bond of the arachidonoyl moiety of anandamide, potentially modulating endocannabinoid signaling. Has no hydroxylase activity toward various fatty acids, steroids and prostaglandins. Mechanistically, uses molecular oxygen inserting one oxygen atom into a substrate, and reducing the second into a water molecule, with two electrons provided by NADPH via cytochrome P450 reductase (CPR; NADPH-ferrihemoprotein reductase). This chain is Cytochrome P450 4X1, found in Homo sapiens (Human).